Reading from the N-terminus, the 702-residue chain is Ribosomal RNA large subunit methyltransferase K/L (702 aa).

Residues 43–154 (LVYQSLMWSR…KETASIALDL (112 aa)) enclose the THUMP domain.

This sequence belongs to the methyltransferase superfamily. RlmKL family.

Its subcellular location is the cytoplasm. It catalyses the reaction guanosine(2445) in 23S rRNA + S-adenosyl-L-methionine = N(2)-methylguanosine(2445) in 23S rRNA + S-adenosyl-L-homocysteine + H(+). It carries out the reaction guanosine(2069) in 23S rRNA + S-adenosyl-L-methionine = N(2)-methylguanosine(2069) in 23S rRNA + S-adenosyl-L-homocysteine + H(+). Specifically methylates the guanine in position 2445 (m2G2445) and the guanine in position 2069 (m7G2069) of 23S rRNA. The sequence is that of Ribosomal RNA large subunit methyltransferase K/L from Shigella boydii serotype 4 (strain Sb227).